The following is a 702-amino-acid chain: Polyribonucleotide nucleotidyltransferase (702 aa).

2 residues coordinate Mg(2+): Asp485 and Asp491. In terms of domain architecture, KH spans 552–612 (PRTEIICIDP…EGVKKAISII (61 aa)). The S1 motif domain occupies 622-690 (GEIYLGKVTK…NQGRINLSRK (69 aa)).

The protein belongs to the polyribonucleotide nucleotidyltransferase family. Mg(2+) serves as cofactor.

It is found in the cytoplasm. It catalyses the reaction RNA(n+1) + phosphate = RNA(n) + a ribonucleoside 5'-diphosphate. In terms of biological role, involved in mRNA degradation. Catalyzes the phosphorolysis of single-stranded polyribonucleotides processively in the 3'- to 5'-direction. The sequence is that of Polyribonucleotide nucleotidyltransferase from Clostridium botulinum (strain Langeland / NCTC 10281 / Type F).